Here is a 296-residue protein sequence, read N- to C-terminus: (+)-neomenthol dehydrogenase (296 aa).

Residue arginine 16–glutamate 40 coordinates NADP(+). Serine 164 is a binding site for substrate. Tyrosine 220 acts as the Proton acceptor in catalysis.

It belongs to the short-chain dehydrogenases/reductases (SDR) family. Monomer.

It is found in the cytoplasm. It catalyses the reaction (+)-neomenthol + NADP(+) = (1R,4S)-menthone + NADPH + H(+). Functionally, aldehyde reductase that catalyzes the reduction of the aldehyde carbonyl groups on saturated and alpha,beta-unsaturated aldehydes with more than 5 carbons. Involved in basal resistance against pathogens. The polypeptide is (+)-neomenthol dehydrogenase (SDR1) (Arabidopsis thaliana (Mouse-ear cress)).